A 254-amino-acid polypeptide reads, in one-letter code: Acetylglutamate kinase (254 aa).

Substrate contacts are provided by residues 40 to 41, R62, and N158; that span reads GG.

It belongs to the acetylglutamate kinase family. ArgB subfamily.

The protein resides in the cytoplasm. The enzyme catalyses N-acetyl-L-glutamate + ATP = N-acetyl-L-glutamyl 5-phosphate + ADP. Its pathway is amino-acid biosynthesis; L-arginine biosynthesis; N(2)-acetyl-L-ornithine from L-glutamate: step 2/4. Functionally, catalyzes the ATP-dependent phosphorylation of N-acetyl-L-glutamate. In Chloroflexus aurantiacus (strain ATCC 29366 / DSM 635 / J-10-fl), this protein is Acetylglutamate kinase.